A 160-amino-acid polypeptide reads, in one-letter code: Coat protein TP3 (160 aa).

The protein localises to the virion. In Thermoproteus tenax (TTV1), this protein is Coat protein TP3.